Here is a 246-residue protein sequence, read N- to C-terminus: Tyrosine recombinase XerD-like (246 aa).

A Core-binding (CB) domain is found at 1-72 (MINDINNFIE…AVNQFLFFLY (72 aa)). Positions 84-246 (QETEKITLTQ…TPITLERYYR (163 aa)) constitute a Tyr recombinase domain. Residues K149 and R212 contribute to the active site. Y244 functions as the O-(3'-phospho-DNA)-tyrosine intermediate in the catalytic mechanism.

Belongs to the 'phage' integrase family. XerD-like subfamily.

The protein resides in the cytoplasm. In terms of biological role, putative tyrosine recombinase. Not involved in the cutting and rejoining of the recombining DNA molecules on dif(SL) site. The chain is Tyrosine recombinase XerD-like from Streptococcus agalactiae serotype III (strain NEM316).